We begin with the raw amino-acid sequence, 143 residues long: Large ribosomal subunit protein uL16 (143 aa).

It belongs to the universal ribosomal protein uL16 family. Part of the 50S ribosomal subunit.

In terms of biological role, binds 23S rRNA and is also seen to make contacts with the A and possibly P site tRNAs. In Sphingopyxis alaskensis (strain DSM 13593 / LMG 18877 / RB2256) (Sphingomonas alaskensis), this protein is Large ribosomal subunit protein uL16.